The sequence spans 242 residues: Probable transcriptional regulatory protein Dred_1658 (242 aa).

Belongs to the TACO1 family.

It is found in the cytoplasm. The protein is Probable transcriptional regulatory protein Dred_1658 of Desulforamulus reducens (strain ATCC BAA-1160 / DSM 100696 / MI-1) (Desulfotomaculum reducens).